The primary structure comprises 517 residues: Legumin A (517 aa).

The signal sequence occupies residues M1–A21. Disulfide bonds link C31-C64 and C107-C339. Residues L36–D232 form the Cupin type-1 1 domain. Positions V249 to E335 are disordered. Positions L345–R494 constitute a Cupin type-1 2 domain.

Belongs to the 11S seed storage protein (globulins) family. As to quaternary structure, hexamer; each subunit is composed of an acidic and a basic chain derived from a single precursor and linked by a disulfide bond.

Its function is as follows. This protein found in the seeds of many leguminous and non-leguminous plants is the source of sulfur-containing amino acids in seed meals. The protein is Legumin A (LEGA) of Pisum sativum (Garden pea).